The primary structure comprises 170 residues: Ubiquitin-conjugating enzyme E2 J2-like (170 aa).

One can recognise a UBC core domain in the interval 15 to 165 (DCITRLKREF…NKTFCELFPY (151 aa)). Cys97 acts as the Glycyl thioester intermediate in catalysis.

The protein belongs to the ubiquitin-conjugating enzyme family.

It carries out the reaction S-ubiquitinyl-[E1 ubiquitin-activating enzyme]-L-cysteine + [E2 ubiquitin-conjugating enzyme]-L-cysteine = [E1 ubiquitin-activating enzyme]-L-cysteine + S-ubiquitinyl-[E2 ubiquitin-conjugating enzyme]-L-cysteine.. It participates in protein modification; protein ubiquitination. In terms of biological role, catalyzes the covalent attachment of ubiquitin to other proteins. This Dictyostelium discoideum (Social amoeba) protein is Ubiquitin-conjugating enzyme E2 J2-like.